We begin with the raw amino-acid sequence, 807 residues long: Enhancer of polycomb homolog 2 (807 aa).

Glycyl lysine isopeptide (Lys-Gly) (interchain with G-Cter in SUMO2) cross-links involve residues K135, K195, K324, and K362. The interval 376-396 (DEFPQVLSPVSEPEEENDPDG) is disordered. Position 538 is a phosphoserine (S538). Over residues 600-613 (QLQQKQQSQHSSQQ) the composition is skewed to low complexity. 2 disordered regions span residues 600–628 (QLQQ…DCMS) and 645–673 (SAPV…QPSG). Polar residues-rich tracts occupy residues 614–628 (THPK…DCMS) and 657–673 (EQNT…QPSG). At S754 the chain carries Phosphoserine.

Belongs to the enhancer of polycomb family.

Its subcellular location is the nucleus. In terms of biological role, may play a role in transcription or DNA repair. This chain is Enhancer of polycomb homolog 2 (EPC2), found in Homo sapiens (Human).